The following is a 739-amino-acid chain: Probable beta-glucosidase L (739 aa).

The N-terminal stretch at 1-17 (MQTLFLSLLAAAVTVHA) is a signal peptide. Residues asparagine 40 and asparagine 224 are each glycosylated (N-linked (GlcNAc...) asparagine). The active site involves aspartate 252. N-linked (GlcNAc...) asparagine glycosylation is present at asparagine 398.

This sequence belongs to the glycosyl hydrolase 3 family.

The protein resides in the secreted. The catalysed reaction is Hydrolysis of terminal, non-reducing beta-D-glucosyl residues with release of beta-D-glucose.. The protein operates within glycan metabolism; cellulose degradation. Beta-glucosidases are one of a number of cellulolytic enzymes involved in the degradation of cellulosic biomass. Catalyzes the last step releasing glucose from the inhibitory cellobiose. The protein is Probable beta-glucosidase L (bglL) of Aspergillus fumigatus (strain ATCC MYA-4609 / CBS 101355 / FGSC A1100 / Af293) (Neosartorya fumigata).